A 144-amino-acid polypeptide reads, in one-letter code: Large ribosomal subunit protein uL13 (144 aa).

This sequence belongs to the universal ribosomal protein uL13 family. Part of the 50S ribosomal subunit.

Functionally, this protein is one of the early assembly proteins of the 50S ribosomal subunit, although it is not seen to bind rRNA by itself. It is important during the early stages of 50S assembly. This chain is Large ribosomal subunit protein uL13, found in Oleidesulfovibrio alaskensis (strain ATCC BAA-1058 / DSM 17464 / G20) (Desulfovibrio alaskensis).